Reading from the N-terminus, the 121-residue chain is Small ribosomal subunit protein uS13 (121 aa).

Residues 93–121 form a disordered region; it reads RGLPVRGQNTKNNARTRKGKATAIAGKKK. The span at 106–121 shows a compositional bias: basic residues; it reads ARTRKGKATAIAGKKK.

This sequence belongs to the universal ribosomal protein uS13 family. As to quaternary structure, part of the 30S ribosomal subunit. Forms a loose heterodimer with protein S19. Forms two bridges to the 50S subunit in the 70S ribosome.

Located at the top of the head of the 30S subunit, it contacts several helices of the 16S rRNA. In the 70S ribosome it contacts the 23S rRNA (bridge B1a) and protein L5 of the 50S subunit (bridge B1b), connecting the 2 subunits; these bridges are implicated in subunit movement. Contacts the tRNAs in the A and P-sites. This Streptococcus uberis (strain ATCC BAA-854 / 0140J) protein is Small ribosomal subunit protein uS13.